A 345-amino-acid chain; its full sequence is Hemin transport protein HmuS (345 aa).

To Y.enterocolitica HemS.

In terms of biological role, part of the binding-protein-dependent transport system for hemin. The chain is Hemin transport protein HmuS (hmuS) from Yersinia pestis.